We begin with the raw amino-acid sequence, 215 residues long: Small ribosomal subunit protein uS7 (215 aa).

It belongs to the universal ribosomal protein uS7 family. In terms of assembly, part of the 30S ribosomal subunit.

Functionally, one of the primary rRNA binding proteins, it binds directly to 16S rRNA where it nucleates assembly of the head domain of the 30S subunit. Is located at the subunit interface close to the decoding center. The chain is Small ribosomal subunit protein uS7 from Thermococcus gammatolerans (strain DSM 15229 / JCM 11827 / EJ3).